The chain runs to 278 residues: Cyclin-C (278 aa).

Positions 41 to 139 (NVIQALGEHL…ILECEFYLLE (99 aa)) constitute a Cyclin N-terminal domain. The segment at 247–278 (TILSKMPKPKPPPNSEGEQGPNGSQNSSYSQS) is disordered. A compositionally biased stretch (polar residues) spans 267-278 (PNGSQNSSYSQS). S270 carries the phosphoserine modification.

Belongs to the cyclin family. Cyclin C subfamily. As to quaternary structure, component of the Mediator complex, which is composed of MED1, MED4, MED6, MED7, MED8, MED9, MED10, MED11, MED12, MED13, MED13L, MED14, MED15, MED16, MED17, MED18, MED19, MED20, MED21, MED22, MED23, MED24, MED25, MED26, MED27, MED29, MED30, MED31, CCNC, CDK8 and CDC2L6/CDK11. The MED12, MED13, CCNC and CDK8 subunits form a distinct module termed the CDK8 module. Mediator containing the CDK8 module is less active than Mediator lacking this module in supporting transcriptional activation. Individual preparations of the Mediator complex lacking one or more distinct subunits have been variously termed ARC, CRSP, DRIP, PC2, SMCC and TRAP. The cylin/CDK pair formed by CCNC/CDK8 also associates with the large subunit of RNA polymerase II.

The protein resides in the nucleus. In terms of biological role, component of the Mediator complex, a coactivator involved in regulated gene transcription of nearly all RNA polymerase II-dependent genes. Mediator functions as a bridge to convey information from gene-specific regulatory proteins to the basal RNA polymerase II transcription machinery. Mediator is recruited to promoters by direct interactions with regulatory proteins and serves as a scaffold for the assembly of a functional preinitiation complex with RNA polymerase II and the general transcription factors. Binds to and activates cyclin-dependent kinase CDK8 that phosphorylates the CTD (C-terminal domain) of the large subunit of RNA polymerase II (RNAp II), which may inhibit the formation of a transcription initiation complex. The protein is Cyclin-C (Ccnc) of Rattus norvegicus (Rat).